Reading from the N-terminus, the 112-residue chain is Small ribosomal subunit protein eS24 (112 aa).

Residues 88 to 112 (RGMAGEEEGNADAQDAPSGDAAEAS) are disordered.

The protein belongs to the eukaryotic ribosomal protein eS24 family.

In Methanospirillum hungatei JF-1 (strain ATCC 27890 / DSM 864 / NBRC 100397 / JF-1), this protein is Small ribosomal subunit protein eS24.